The chain runs to 2291 residues: MRGHQFKSWILELREILREIKNSHHFLDSWTQFTSVGSFIHIFFHQERFLKLFDPRIWSILLSRNSQGSTSNRYFTIKGVILFVVAVLIYRINNRNMVERKNLYLIGLLPIPMNSIGPRNDTLEESVGSSNINRLIVSLLYLPKGKKISESCFLNPKESTWVLPITKKCSMPESNWGSRWWRNWIGKKRDSSCKISNETVAGIEILFKEKDLKYLEFLFVYYMDDPIRKDHDWELFDRLSLRKSRNRINLNSGPLFEILVKHWISYLMSAFREKIPIEVEGFFKQQGAGSTIQSNDIEHVSHLFSRNKWAISLQNCAQFHMWQFRQDLFVSWGKNPPESDFLRNVSRENWIWLDNVWLVNKDRFFSKVQNVSSNIQYDSTRSSFVQVTDSSQLKGSSDQSRDHLDSISNEDSEYHTLINQREIQQRKERSILWDPSFLQMERKEIESGRFPKCLSGYSSMSRLFTEREKQMINHLFPEEIEEFLGNPTRSVRSFFSDRWSELHLGSNPTERSTRDQKLLKKQQDLSFVPSRRSENKEMVNIFKIITYLQNTVSIHPISSDPGCDMVPKDEPDMDSSNKISFLNKNPFFDLFHLFHDRNRGGYTLHYDFESEERFQEMADLFTLSITEPDLVYHKGFAFSIDSCGLDQKQFLNEARDESKKKSLLVLPPIFYEENESFSRRIRKKWVRISCGNDLEDPKPKIVVFASNNIMEAVTQYRLIRNLIQIQYSTYGYIRNVLNRFFLMNRSDRNFEYGIQRDQIGKDTLNHRTIMKYTINQYLSNLKKSQKKWFEPLILISRTERSMNRDPDAYRYKWSNGSKNFQEHLEQSVSEQKSRFQVVFDRLRINQYSIDWSEVIDKKDLSKPLRFFLSKPLRFFLSKSLLFLSKLLFFLSNSLPFFCVSFGNIPIHRSEIYIYELKGPNDQLCNQLLESIGLQIVHLKKLKPFLLDDHDTSQKSKFLINGGTISPFLFNKIPKWMIDSFHTRNNRRKSFDNPDSNFSMIFHDQDNWLNPVKPFHRSSLISSFYKANRLRFLNNPHHFCFYWNTRFPFSVEKARINNSYFTYGQFLNILFIRNKIFSLCVGNKKHAFWGRDTISPIESQVSNIFIPNDFPQSGDETYNLYKSFHFPSRSDPFVRRAIYSIADISGTPLTEGQIVNFERTYCQPLSDMNLSDSEGKNLHQYLNFNSNMGLIHTPCSEKDLSSEKRKKRSLCLKKCVEKGQMYRTFQRDSAFSTLSKWNLFQTYMPWFLTSTGYKYLNLIFLDTFSDLLPILSSSQKFVSIFPDIMHGSGISWRILQKKLCLPQWNLISEISEISSKCLHNLLLSEEMIHRNNESPLISTHLRSPNAREFLYSILFLLLVAGYLVRTHLLFVSRASSELQTEFEKVKSLMIPSSMIELRKLLDRYPTSEPNSFWLKNLFLVALEQLGDSLEEIRGSASGGNMLGPAYGVKSIRSKKKDWNINLIEIIDLIPNPINRITFSRNTRHLSHTSKEIYSLIRKRKNVNGDWIDDKIESWVANSDSIADEEREFLVQFSTLTTENRIDQILLSLTHSDHLSKNDSGYQMIEQPGAIYLRYLVDIHKKHLMNYEFNPSCLAERRIFLAHYQTITYSQTSCGENSFHFPSHGKPFSLRLALSPSRGILVIGSIGTGRSYLVKYLATNSYVPFITVFLNKFLDNKPKGFLLDEIDIDDSDDIDDSDNLDASDDIGRDLDTELELLTRMNGLTMDMMPEIDRFYITLQFELAKAMSPCIIWIPNIHDLDVNESNDLSLGLLVNHLSRDCERCSTRNILVIASTHIPQKVDPALIAPNKLNTCIKIRRLLIPQQRKHFFTLSYTRGFHLEKKMFHTNGFGSITMGSNARDLVALTNEVLSISITQKKSIIDTNTIRSALHRQTWDLRSQVRSVQDHGILFYQIGRAVAQNVLLSNCPIDPISIYMKKKSCNEGDSYLYKWYFELGTSMKRLTILLYLLSCSAGSVAQDLWSLSGPDEKNGITSYGLVENDSDLVHGLLEVEGALVGSSRTEKDCSQFDNDRVTLLLRPEPRNPLDMMQKGSCSILDQRFLYEKYESEFEEGEGEGALDPQEDLFNHIVWAPRIWRPWGFLFDCIERPNELGFPYWSRSFRGKRIIYDEEDELQENDSGFLQSGTMQYQTRDRSSKEQGLFRISQFIWDPADPLFFLFKDQPPGSVFSHRELFADEEMSKGLLTSQTDPPTSIYKRWFIKNTQEKHFELLINRQRWLRTNSSLSNGSFRSNTLSESYQYLSNLFLSNGTLLDQMTKTLLRKRWLFPDEMKIGFM.

1642–1649 (GSIGTGRS) serves as a coordination point for ATP.

It belongs to the Ycf2 family.

It is found in the plastid. The protein localises to the chloroplast stroma. Probable ATPase of unknown function. Its presence in a non-photosynthetic plant (Epifagus virginiana) and experiments in tobacco indicate that it has an essential function which is probably not related to photosynthesis. The sequence is that of Protein Ycf2 B (ycf2-B) from Atropa belladonna (Belladonna).